Consider the following 856-residue polypeptide: cGMP-dependent protein kinase (856 aa).

The autoinhibitory segment stretch occupies residues 1 to 33 (MDDDEIIPKKNHPSNERNKKKAILSHEDFTGED). CNMP-binding domain regions lie at residues 62–177 (VCST…FIDS), 180–279 (VFDM…VVLG), 299–402 (IFKQ…LGNN), and 422–521 (IFRY…LQII). Residues lysine 117, glycine 126, glutamate 127, alanine 129, arginine 136, and serine 137 each contribute to the 3',5'-cyclic GMP site. 3',5'-cyclic GMP is bound by residues arginine 477, glycine 486, glutamate 487, alanine 489, arginine 496, and threonine 497. Residues 545–802 (LLTERIIGRG…FKDIKENSFF (258 aa)) enclose the Protein kinase domain. Residues 551–559 (IGRGTFGIV) and lysine 574 each bind ATP. Aspartate 668 (proton acceptor) is an active-site residue. In terms of domain architecture, AGC-kinase C-terminal spans 803 to 856 (ADFDWDRLAGRLLEPPLISKSETYAEDIDVKQIEQEEEDNANTEIDDENWDIDF). Residues 837–856 (QEEEDNANTEIDDENWDIDF) form a disordered region.

The protein belongs to the protein kinase superfamily. AGC Ser/Thr protein kinase family. cGMP subfamily. In terms of assembly, monomer. It depends on Mg(2+) as a cofactor. Autophosphorylated.

The protein resides in the cytoplasm. It is found in the endoplasmic reticulum membrane. The enzyme catalyses L-seryl-[protein] + ATP = O-phospho-L-seryl-[protein] + ADP + H(+). The catalysed reaction is L-threonyl-[protein] + ATP = O-phospho-L-threonyl-[protein] + ADP + H(+). With respect to regulation, activated by cGMP. Not activated by cAMP. cGMP binding allosterically triggers a conformational change at the alpha C-helix of cGMP-binding domain 4, which bridges the regulatory and catalytic domains, causing the capping triad, composed of Arg-488, Gln-536 and Asp-537, to form and stabilize the active conformation. The cGMP-binding domains acts cooperatively to activate PKG. Its function is as follows. Serine/threonine protein kinase which acts as a downstream effector of the second messenger cGMP. Controls the release of Ca(2+) from intracellular stores by regulating phosphoinositide biosynthesis. Ca(2+) signals are essential for merozoite and sporozoite invasion and egress from host hepatocytes and erythrocytes, and, in the mosquito vector, for gametocyte activation, and ookinete and sporozoite motility. During the host liver stage, regulates the initial invasion of host hepatocytes by sporozoites by regulating sporozoite motility and microneme exocytosis. Following parasite development in the hepatocytes, required for the release of merosomes, a vesicle containing the mature merozoites. During the asexual blood stage, required for the progression from schizont to the ring stage following merozoite invasion of host erythrocytes and for merozoite egress. Regulates merozoite egress by promoting the release of exonemes and micronemes which contain proteins essential for egress. Phosphorylates CDPK1 predominantly at the late schizont stage; phosphorylation at 'Ser-64' regulates CDPK1 protein-protein interaction and phosphorylation at 'Thr-231' may regulate CDPK1 kinase activity. In the mosquito vector, required for the initiation of gametogenesis induced by xanthurenic acid, specifically the gametocyte differentiation from the crescent-shaped form to the spherical form. Required for the gliding motility of ookinetes to reach and penetrate the midgut epithelium by promoting Ca(2+)-mediated activation of CDPK1 and CDPK4. Also required for microneme secretion in ookinete by promoting Ca(2+)-mediated activation of CDPK3. The protein is cGMP-dependent protein kinase of Plasmodium berghei (strain Anka).